We begin with the raw amino-acid sequence, 197 residues long: NADH-quinone oxidoreductase subunit C (197 aa).

Belongs to the complex I 30 kDa subunit family. NDH-1 is composed of 14 different subunits. Subunits NuoB, C, D, E, F, and G constitute the peripheral sector of the complex.

The protein localises to the cell inner membrane. It catalyses the reaction a quinone + NADH + 5 H(+)(in) = a quinol + NAD(+) + 4 H(+)(out). In terms of biological role, NDH-1 shuttles electrons from NADH, via FMN and iron-sulfur (Fe-S) centers, to quinones in the respiratory chain. The immediate electron acceptor for the enzyme in this species is believed to be ubiquinone. Couples the redox reaction to proton translocation (for every two electrons transferred, four hydrogen ions are translocated across the cytoplasmic membrane), and thus conserves the redox energy in a proton gradient. This is NADH-quinone oxidoreductase subunit C from Neisseria gonorrhoeae (strain ATCC 700825 / FA 1090).